The chain runs to 302 residues: 4-hydroxy-tetrahydrodipicolinate synthase (302 aa).

Threonine 55 lines the pyruvate pocket. The active-site Proton donor/acceptor is tyrosine 144. Lysine 172 (schiff-base intermediate with substrate) is an active-site residue. Pyruvate is bound at residue valine 214.

It belongs to the DapA family. As to quaternary structure, homotetramer; dimer of dimers.

Its subcellular location is the cytoplasm. It catalyses the reaction L-aspartate 4-semialdehyde + pyruvate = (2S,4S)-4-hydroxy-2,3,4,5-tetrahydrodipicolinate + H2O + H(+). It participates in amino-acid biosynthesis; L-lysine biosynthesis via DAP pathway; (S)-tetrahydrodipicolinate from L-aspartate: step 3/4. In terms of biological role, catalyzes the condensation of (S)-aspartate-beta-semialdehyde [(S)-ASA] and pyruvate to 4-hydroxy-tetrahydrodipicolinate (HTPA). The sequence is that of 4-hydroxy-tetrahydrodipicolinate synthase from Synechococcus sp. (strain CC9605).